The chain runs to 423 residues: Serine--tRNA ligase (423 aa).

Residue 228–230 (TSE) coordinates L-serine. 259–261 (RLE) lines the ATP pocket. Glu282 is an L-serine binding site. 346–349 (EISS) is an ATP binding site. Ser384 provides a ligand contact to L-serine.

It belongs to the class-II aminoacyl-tRNA synthetase family. Type-1 seryl-tRNA synthetase subfamily. In terms of assembly, homodimer. The tRNA molecule binds across the dimer.

The protein localises to the cytoplasm. The catalysed reaction is tRNA(Ser) + L-serine + ATP = L-seryl-tRNA(Ser) + AMP + diphosphate + H(+). It catalyses the reaction tRNA(Sec) + L-serine + ATP = L-seryl-tRNA(Sec) + AMP + diphosphate + H(+). It functions in the pathway aminoacyl-tRNA biosynthesis; selenocysteinyl-tRNA(Sec) biosynthesis; L-seryl-tRNA(Sec) from L-serine and tRNA(Sec): step 1/1. Its function is as follows. Catalyzes the attachment of serine to tRNA(Ser). Is also able to aminoacylate tRNA(Sec) with serine, to form the misacylated tRNA L-seryl-tRNA(Sec), which will be further converted into selenocysteinyl-tRNA(Sec). In Ehrlichia canis (strain Jake), this protein is Serine--tRNA ligase.